A 113-amino-acid chain; its full sequence is uncharacterized protein (113 aa).

The N-terminal 14 residues, 1-14, are a transit peptide targeting the mitochondrion; the sequence is MATRNALRIVSRRF. The interval 41–79 is disordered; the sequence is QKLARQGPGEQAAGSASEAKVAGATASASAESGPKVSED. Residues 55 to 73 show a composition bias toward low complexity; it reads SASEAKVAGATASASAESG.

It is found in the mitochondrion. This is an uncharacterized protein from Arabidopsis thaliana (Mouse-ear cress).